Reading from the N-terminus, the 859-residue chain is Bifunctional levopimaradiene synthase, chloroplastic (859 aa).

Residues 1–70 (MALLSSSLSS…IACVGEDSLS (70 aa)) constitute a chloroplast transit peptide. Lysine 259 is a substrate binding site. 2 residues coordinate Mg(2+): aspartate 392 and aspartate 394. The DXDD motif motif lies at 392–395 (DIDD). Lysine 479 contributes to the substrate binding site. Positions 611, 615, 755, 759, and 763 each coordinate Mg(2+). The short motif at 611–615 (DDLYD) is the DDXXD motif element.

Belongs to the terpene synthase family. Tpsd subfamily. Requires Mg(2+) as cofactor.

The protein localises to the plastid. It localises to the chloroplast. It catalyses the reaction (2E,6E,10E)-geranylgeranyl diphosphate = (+)-copalyl diphosphate. It carries out the reaction (+)-copalyl diphosphate = abieta-8(14),12-diene + diphosphate. The protein operates within terpene metabolism; oleoresin biosynthesis. Involved in defensive oleoresin formation in conifers in response to insect attack or other injury. Involved in diterpene (C20) olefins biosynthesis. Bifunctional enzyme that catalyzes two sequential cyclizations of geranylgeranyl diphosphate (GGPP) to levopimaradiene. Levopimaradiene is the major products of the enzyme followed by abietadiene, neoabietadiene and palustradiene. In Picea abies (Norway spruce), this protein is Bifunctional levopimaradiene synthase, chloroplastic (TPS-LAS).